The following is a 193-amino-acid chain: MAAEQVEDYCISFVEMKFINNTLYFVAENDEDLESDHFGKLEPKLSIIRNLNDQVLFINQGNQPVFEDMPDSDCSDNAPQTIFIIYMYKDSLTRGLAVTISVQCKKMSTLSCENKIVSFKEMNPPDNIDNEESDIIFFQRSVPGHDDKIQFESSLYKGYFLACKKENDLFKLILKKQDDNRDKSVMFTVQNQN.

Positions 1-36 (MAAEQVEDYCISFVEMKFINNTLYFVAENDEDLESD) are excised as a propeptide.

It belongs to the IL-1 family. Forms a ternary complex with ligand-binding receptor subunit IL18R1 and signaling receptor subunit IL18RAP at the plasma membrane. Mature IL18 first binds to IL18R1 forming a low affinity binary complex, which then interacts with IL18RAP to form a high affinity ternary complex that signals inside the cell. Interacts with cargo receptor TMED10; the interaction mediates the translocation from the cytoplasm into the ERGIC (endoplasmic reticulum-Golgi intermediate compartment) and thereby secretion. The pro-IL-18 precursor is processed by CASP1, CASP4 or CASP5 to yield its mature, active form. The pro-IL-18 precursor features autoinhibitory interactions between the propeptide and the post-cleavage-site region, preventing recognition by the IL18R1 receptor. Processing by CASP1, CASP4 or CASP5 induces conformational changes to generate critical receptor-binding sites. The mature form is then secreted and released in the extracellular milieu by passing through the gasdermin-D (GSDMD) pore. In contrast, cleavage by CASP3 inactivates IL18.

It is found in the cytoplasm. Its subcellular location is the cytosol. It localises to the secreted. Its function is as follows. Pro-inflammatory cytokine primarily involved in epithelial barrier repair, polarized T-helper 1 (Th1) cell and natural killer (NK) cell immune responses. Upon binding to IL18R1 and IL18RAP, forms a signaling ternary complex which activates NF-kappa-B, triggering synthesis of inflammatory mediators. Synergizes with IL12/interleukin-12 to induce IFNG synthesis from T-helper 1 (Th1) cells and natural killer (NK) cells. Involved in transduction of inflammation downstream of pyroptosis: its mature form is specifically released in the extracellular milieu by passing through the gasdermin-D (GSDMD) pore. This is Interleukin-18 (IL18) from Bos taurus (Bovine).